The chain runs to 280 residues: Lacto-N-neotetraose biosynthesis glycosyltransferase LgtE (280 aa).

The protein belongs to the glycosyltransferase 25 family.

It participates in glycan metabolism; lacto-N-neotetraose biosynthesis. It functions in the pathway bacterial outer membrane biogenesis; lipooligosaccharide biosynthesis. Adds the first galactose to the lacto-N-tetraose chain in lipooligosaccharide (LOS). The protein is Lacto-N-neotetraose biosynthesis glycosyltransferase LgtE (lgtE) of Neisseria meningitidis serogroup B (strain ATCC BAA-335 / MC58).